The primary structure comprises 94 residues: Integration host factor subunit beta (94 aa).

This sequence belongs to the bacterial histone-like protein family. As to quaternary structure, heterodimer of an alpha and a beta chain.

This protein is one of the two subunits of integration host factor, a specific DNA-binding protein that functions in genetic recombination as well as in transcriptional and translational control. The protein is Integration host factor subunit beta of Mesorhizobium japonicum (strain LMG 29417 / CECT 9101 / MAFF 303099) (Mesorhizobium loti (strain MAFF 303099)).